A 378-amino-acid polypeptide reads, in one-letter code: MSTPEQWIQEFEALCSRASILFPSGIEDENIRIRALRIAEKAVHQLHTPMTFAEAQTWAPLELFGAGVACEMGIFDVLSKSSVPLSPVDIATELNTDPALVARIMRLLDAHYMVDQVTLGQYAANAITRDYVQPYRKGNVMTQVALMPSYFALPAWLRDNDYKVRPDANHCAWQVGANTTKTFWEMPRTTQEDDFVTFYPFEAVFSTSNVDDILFVDIGGGLGHQAMRVRSAFPRSRGRIIVQDLPQVTNKITTASLPDVEIMDHDMADPQPVKGARVYYLRGVLHNHADHISIKYLSQFAAAMSPESRLLIHEALATDLNPTKNITRFDLSMLASCGGAQRSEAEQKALLEKVGLEVSGVWSTPRDWSIMEARLKRE.

S-adenosyl-L-methionine is bound by residues 219–220, aspartate 244, 266–267, and arginine 282; these read GG and DM. Histidine 286 serves as the catalytic Proton acceptor.

The protein belongs to the class I-like SAM-binding methyltransferase superfamily. Cation-independent O-methyltransferase family.

It catalyses the reaction desmethyl-dehydrogriseofulvin + S-adenosyl-L-methionine = dehydrogriseofulvin + S-adenosyl-L-homocysteine + H(+). The protein operates within secondary metabolite biosynthesis; terpenoid biosynthesis. O-methyltransferase; part of the gene cluster that mediates the biosynthesis of griseofulvin, an important antifungal drug that has been in use for a long time for treating dermatophyte infections. The first step of the pathway is the formation of the heptaketide backbone by gsfA which is initiated by priming with acetyl-CoA, followed by sequential condensations of 6 malonyl-CoA units. The resulting benzophenone can undergo a spontaneous dehydration to form norlichexanthone. However, the true precursor for the griseofulvin biosynthesis is not norlichexanthone, but the heptaketide benzophenone that is O-methylated at 3-OH by gsfB to produce griseophenone D which is further methylated at 9-OH by gsfC to yield griseophenone C. Griseophenone C is then substrate of halogenase gsfI which is responsible for the regio-specific chlorination at the C13 position to form griseophenone B. The cytochrome P450 gsfF catalyzes the coupling of orcinol and phloroglucinol rings in griseophenone B to form desmethyl-dehydrogriseofulvin A which is further methylated at 5-OH by gsfD to yield dehydrogriseofulvin. Finally, gsfE performs stereospecific reduction of enone 18 of dehydrogriseofulvin to afford the final product griseofulvin. The polypeptide is O-methyltransferase gsfD (Penicillium aethiopicum).